The sequence spans 156 residues: Peptidyl-prolyl cis-trans isomerase cypE (156 aa).

The PPIase cyclophilin-type domain maps to 2–155 (TEQTVTLQTT…DEIRIIKATA (154 aa)).

This sequence belongs to the cyclophilin-type PPIase family. As to quaternary structure, interacts with snwA.

Its subcellular location is the cytoplasm. It is found in the nucleus. It catalyses the reaction [protein]-peptidylproline (omega=180) = [protein]-peptidylproline (omega=0). In terms of biological role, catalyzes the cis-trans isomerization of proline imidic peptide bonds in oligopeptides. Plays a role in protein folding, transport and assembly. This is Peptidyl-prolyl cis-trans isomerase cypE (cypE) from Dictyostelium discoideum (Social amoeba).